Consider the following 604-residue polypeptide: uncharacterized protein (604 aa).

The 285-residue stretch at 45-329 (LPLSFLTVLI…LGQVYNQLLM (285 aa)) folds into the ABC transmembrane type-1 domain. A run of 6 helical transmembrane segments spans residues 49–69 (FLTVLIGTAVKLVIPILIGVY), 82–102 (LLIQLIFIISGLYVLNYAANV), 162–182 (VINLLTDLLLLAGVIIILFTL), 184–204 (PELTIAIMVTLPIMFFISTSL), 273–293 (LVEMTNAIGTAVLIWYGATLI), and 297–317 (TITIGVFVSFAFYLGMFWEPI). Positions 363 to 597 (ISFEEVEFSY…GGIYAGLVKA (235 aa)) constitute an ABC transporter domain. An ATP-binding site is contributed by 396-403 (GHTGSGKT).

This sequence belongs to the ABC transporter superfamily.

It localises to the cell membrane. This is an uncharacterized protein from Bacillus subtilis (strain 168).